Consider the following 275-residue polypeptide: Shikimate dehydrogenase (NADP(+)) (275 aa).

Shikimate is bound by residues 15-17 (SKS) and threonine 62. The active-site Proton acceptor is lysine 66. NADP(+) is bound at residue glutamate 78. Shikimate contacts are provided by asparagine 87 and aspartate 102. Residues 128–132 (GAGGA), 151–156 (NRTAEK), and leucine 218 each bind NADP(+). Tyrosine 220 is a shikimate binding site. Glycine 241 contributes to the NADP(+) binding site.

It belongs to the shikimate dehydrogenase family. Homodimer.

The catalysed reaction is shikimate + NADP(+) = 3-dehydroshikimate + NADPH + H(+). It participates in metabolic intermediate biosynthesis; chorismate biosynthesis; chorismate from D-erythrose 4-phosphate and phosphoenolpyruvate: step 4/7. In terms of biological role, involved in the biosynthesis of the chorismate, which leads to the biosynthesis of aromatic amino acids. Catalyzes the reversible NADPH linked reduction of 3-dehydroshikimate (DHSA) to yield shikimate (SA). This is Shikimate dehydrogenase (NADP(+)) from Shouchella clausii (strain KSM-K16) (Alkalihalobacillus clausii).